A 212-amino-acid chain; its full sequence is Thymidylate kinase (212 aa).

Residue glycine 11–threonine 18 participates in ATP binding.

It belongs to the thymidylate kinase family.

It carries out the reaction dTMP + ATP = dTDP + ADP. Phosphorylation of dTMP to form dTDP in both de novo and salvage pathways of dTTP synthesis. The polypeptide is Thymidylate kinase (Buchnera aphidicola subsp. Baizongia pistaciae (strain Bp)).